Here is a 141-residue protein sequence, read N- to C-terminus: Nucleoside diphosphate kinase (141 aa).

Positions 11, 59, 87, 93, 104, and 114 each coordinate ATP. The Pros-phosphohistidine intermediate role is filled by H117.

The protein belongs to the NDK family. Homotetramer. The cofactor is Mg(2+).

It is found in the cytoplasm. It carries out the reaction a 2'-deoxyribonucleoside 5'-diphosphate + ATP = a 2'-deoxyribonucleoside 5'-triphosphate + ADP. The enzyme catalyses a ribonucleoside 5'-diphosphate + ATP = a ribonucleoside 5'-triphosphate + ADP. Major role in the synthesis of nucleoside triphosphates other than ATP. The ATP gamma phosphate is transferred to the NDP beta phosphate via a ping-pong mechanism, using a phosphorylated active-site intermediate. This chain is Nucleoside diphosphate kinase, found in Variovorax paradoxus (strain S110).